The following is a 472-amino-acid chain: Cannabinoid receptor 1 (472 aa).

Topologically, residues 1–116 (MKSILDGLAD…CFMVLNPSQQ (116 aa)) are extracellular. Residues 2-23 (KSILDGLADTTFRTITTDLLYV) form a required for mitochondrial localization region. Asn77 and Asn83 each carry an N-linked (GlcNAc...) asparagine glycan. A helical membrane pass occupies residues 117-142 (LAIAVLSLTLGTFTVLENLLVLCVIL). At 143–154 (HSRSLRCRPSYH) the chain is on the cytoplasmic side. A helical membrane pass occupies residues 155–175 (FIGSLAVADLLGSVIFVYSFI). Residues 176–187 (DFHVFHRKDSRN) are Extracellular-facing. A helical transmembrane segment spans residues 188–212 (VFLFKLGGVTASFTASVGSLFLTAI). Topologically, residues 213-232 (DRYISIHRPLAYKRIVTRPK) are cytoplasmic. The chain crosses the membrane as a helical span at residues 233–255 (AVVAFCLMWTIAIVIAVLPLLGW). Over 256–273 (NCEKLQSVCSDIFPHIDE) the chain is Extracellular. Residues 274 to 299 (TYLMFWIGVTSVLLLFIVYAYMYILW) traverse the membrane as a helical segment. Residues 300–344 (KAHSHAVRMIQRGTQKSIIIHTSEDGKVQVTRPDQARMDIRLAKT) are Cytoplasmic-facing. A helical transmembrane segment spans residues 345-365 (LVLILVVLIICWGPLLAIMVY). Topologically, residues 366–377 (DVFGKMNKLIKT) are extracellular. Residues 378–399 (VFAFCSMLCLLNSTVNPIIYAL) traverse the membrane as a helical segment. The Cytoplasmic segment spans residues 400–472 (RSKDLRHAFR…VSTDTSAEAL (73 aa)). Cys415 carries S-palmitoyl cysteine lipidation. Ser425 and Ser429 each carry phosphoserine.

Belongs to the G-protein coupled receptor 1 family. Interacts (via C-terminus) with CNRIP1; this interaction attenuates constitutive, but not agonist-dependent, inhibition of voltage-gated Ca(2+) channels in neurons. Associates with G protein alpha subunits, including G(i) alpha-1/GNAI1, G(i) alpha-3/GNAI3 and G(o)-alpha/GNAO1; palmitoylation is important for interaction with GNAI3 and GNAO1. In terms of processing, palmitoylation at Cys-415 is important for recruitment at plasma membrane and lipid rafts and association with G protein alpha subunits. In terms of tissue distribution, widely expressed, with highest levels in fetal and adult brain. Expression levels of isoform 2 and isoform 3 are much lower than those of isoform 1.

The protein resides in the cell membrane. The protein localises to the membrane raft. It localises to the mitochondrion outer membrane. It is found in the cell projection. Its subcellular location is the axon. The protein resides in the presynapse. Hemopressin, a peptide derived from hemoglobin subunit alpha (HBA1 and/or HBA2), acts as an antagonist peptide: hemopressin-binding efficiently blocks cannabinoid receptor CNR1 and subsequent signaling. In terms of biological role, G-protein coupled receptor for endogenous cannabinoids (eCBs), including N-arachidonoylethanolamide (also called anandamide or AEA) and 2-arachidonoylglycerol (2-AG), as well as phytocannabinoids, such as delta(9)-tetrahydrocannabinol (THC). Mediates many cannabinoid-induced effects, acting, among others, on food intake, memory loss, gastrointestinal motility, catalepsy, ambulatory activity, anxiety, chronic pain. Signaling typically involves reduction in cyclic AMP. In the hypothalamus, may have a dual effect on mitochondrial respiration depending upon the agonist dose and possibly upon the cell type. Increases respiration at low doses, while decreases respiration at high doses. At high doses, CNR1 signal transduction involves G-protein alpha-i protein activation and subsequent inhibition of mitochondrial soluble adenylate cyclase, decrease in cyclic AMP concentration, inhibition of protein kinase A (PKA)-dependent phosphorylation of specific subunits of the mitochondrial electron transport system, including NDUFS2. In the hypothalamus, inhibits leptin-induced reactive oxygen species (ROS) formation and mediates cannabinoid-induced increase in SREBF1 and FASN gene expression. In response to cannabinoids, drives the release of orexigenic beta-endorphin, but not that of melanocyte-stimulating hormone alpha/alpha-MSH, from hypothalamic POMC neurons, hence promoting food intake. In the hippocampus, regulates cellular respiration and energy production in response to cannabinoids. Involved in cannabinoid-dependent depolarization-induced suppression of inhibition (DSI), a process in which depolarization of CA1 postsynaptic pyramidal neurons mobilizes eCBs, which retrogradely activate presynaptic CB1 receptors, transiently decreasing GABAergic inhibitory neurotransmission. Also reduces excitatory synaptic transmission. In superior cervical ganglions and cerebral vascular smooth muscle cells, inhibits voltage-gated Ca(2+) channels in a constitutive, as well as agonist-dependent manner. In cerebral vascular smooth muscle cells, cannabinoid-induced inhibition of voltage-gated Ca(2+) channels leads to vasodilation and decreased vascular tone. Induces leptin production in adipocytes and reduces LRP2-mediated leptin clearance in the kidney, hence participating in hyperleptinemia. In adipose tissue, CNR1 signaling leads to increased expression of SREBF1, ACACA and FASN genes. In the liver, activation by endocannabinoids leads to increased de novo lipogenesis and reduced fatty acid catabolism, associated with increased expression of SREBF1/SREBP-1, GCK, ACACA, ACACB and FASN genes. May also affect de novo cholesterol synthesis and HDL-cholesteryl ether uptake. Peripherally modulates energy metabolism. In high carbohydrate diet-induced obesity, may decrease the expression of mitochondrial dihydrolipoyl dehydrogenase/DLD in striated muscles, as well as that of selected glucose/ pyruvate metabolic enzymes, hence affecting energy expenditure through mitochondrial metabolism. In response to cannabinoid anandamide, elicits a pro-inflammatory response in macrophages, which involves NLRP3 inflammasome activation and IL1B and IL18 secretion. In macrophages infiltrating pancreatic islets, this process may participate in the progression of type-2 diabetes and associated loss of pancreatic beta-cells. Binds both 2-arachidonoylglycerol (2-AG) and anandamide. Its function is as follows. Only binds 2-arachidonoylglycerol (2-AG) with high affinity. Contrary to its effect on isoform 1, 2-AG behaves as an inverse agonist on isoform 2 in assays measuring GTP binding to membranes. Functionally, only binds 2-arachidonoylglycerol (2-AG) with high affinity. Contrary to its effect on isoform 1, 2-AG behaves as an inverse agonist on isoform 3 in assays measuring GTP binding to membranes. This Homo sapiens (Human) protein is Cannabinoid receptor 1 (CNR1).